A 527-amino-acid polypeptide reads, in one-letter code: tRNA-2-methylthio-N(6)-dimethylallyladenosine synthase (527 aa).

The segment at 1-27 (MMNEKQRLQYTAQIETDHPTDKKSALD) is disordered. A compositionally biased stretch (basic and acidic residues) spans 15-27 (ETDHPTDKKSALD). Residues 84 to 202 (RKFYIRTYGC…LPYILKEAYM (119 aa)) form the MTTase N-terminal domain. Residues cysteine 93, cysteine 129, cysteine 163, cysteine 239, cysteine 243, and cysteine 246 each contribute to the [4Fe-4S] cluster site. Residues 225 to 455 (RKGNIKAWVN…NALVNEISAK (231 aa)) form the Radical SAM core domain. The 64-residue stretch at 458–521 (KEYEGQVVEV…TWTLNGEMVE (64 aa)) folds into the TRAM domain.

Belongs to the methylthiotransferase family. MiaB subfamily. Monomer. Requires [4Fe-4S] cluster as cofactor.

It localises to the cytoplasm. The catalysed reaction is N(6)-dimethylallyladenosine(37) in tRNA + (sulfur carrier)-SH + AH2 + 2 S-adenosyl-L-methionine = 2-methylsulfanyl-N(6)-dimethylallyladenosine(37) in tRNA + (sulfur carrier)-H + 5'-deoxyadenosine + L-methionine + A + S-adenosyl-L-homocysteine + 2 H(+). In terms of biological role, catalyzes the methylthiolation of N6-(dimethylallyl)adenosine (i(6)A), leading to the formation of 2-methylthio-N6-(dimethylallyl)adenosine (ms(2)i(6)A) at position 37 in tRNAs that read codons beginning with uridine. This Anoxybacillus flavithermus (strain DSM 21510 / WK1) protein is tRNA-2-methylthio-N(6)-dimethylallyladenosine synthase.